The following is a 235-amino-acid chain: Hydroxyacylglutathione hydrolase (235 aa).

Residues histidine 53, histidine 55, aspartate 57, histidine 58, histidine 109, aspartate 127, and histidine 165 each contribute to the Zn(2+) site.

It belongs to the metallo-beta-lactamase superfamily. Glyoxalase II family. As to quaternary structure, monomer. The cofactor is Zn(2+).

It carries out the reaction an S-(2-hydroxyacyl)glutathione + H2O = a 2-hydroxy carboxylate + glutathione + H(+). It participates in secondary metabolite metabolism; methylglyoxal degradation; (R)-lactate from methylglyoxal: step 2/2. Its function is as follows. Thiolesterase that catalyzes the hydrolysis of S-D-lactoyl-glutathione to form glutathione and D-lactic acid. The protein is Hydroxyacylglutathione hydrolase of Actinobacillus pleuropneumoniae serotype 5b (strain L20).